The sequence spans 129 residues: Small ribosomal subunit protein uS11 (129 aa).

This sequence belongs to the universal ribosomal protein uS11 family. In terms of assembly, part of the 30S ribosomal subunit. Interacts with proteins S7 and S18. Binds to IF-3.

Its function is as follows. Located on the platform of the 30S subunit, it bridges several disparate RNA helices of the 16S rRNA. Forms part of the Shine-Dalgarno cleft in the 70S ribosome. The chain is Small ribosomal subunit protein uS11 from Oceanobacillus iheyensis (strain DSM 14371 / CIP 107618 / JCM 11309 / KCTC 3954 / HTE831).